The primary structure comprises 431 residues: Cleavage stimulation factor subunit 1 (431 aa).

The segment at 14-35 (LYKLIISQLLYDGYISIANGLI) is hydrophobic. WD repeat units lie at residues 106–145 (SHKG…AKSA), 171–210 (DHVD…AKRA), 215–254 (QEAE…CFVS), 260–301 (QHTD…TTFE), 303–343 (AHDG…TLVR), and 395–430 (GHNN…RSTT).

Homodimer. The CSTF complex is composed of CSTF1 (50 kDa subunit), CSTF2 (64 kDa subunit) and CSTF3 (77 kDa subunit). Interacts (via repeats WD) directly with CSTF3. Interacts (via repeat WD6) with BARD1. Interacts with ERCC6. In terms of processing, the N-terminus is blocked.

The protein resides in the nucleus. One of the multiple factors required for polyadenylation and 3'-end cleavage of mammalian pre-mRNAs. May be responsible for the interaction of CSTF with other factors to form a stable complex on the pre-mRNA. The chain is Cleavage stimulation factor subunit 1 (CSTF1) from Homo sapiens (Human).